Reading from the N-terminus, the 242-residue chain is DNA repair protein RecO (242 aa).

It belongs to the RecO family.

In terms of biological role, involved in DNA repair and RecF pathway recombination. The polypeptide is DNA repair protein RecO (Methylococcus capsulatus (strain ATCC 33009 / NCIMB 11132 / Bath)).